The chain runs to 294 residues: Thymidylate synthase (294 aa).

Residues R31 and 156-157 (RR) contribute to the dUMP site. Catalysis depends on C176, which acts as the Nucleophile. Residues 196 to 199 (RSAD), N207, and 237 to 239 (HIY) each bind dUMP. D199 is a binding site for (6R)-5,10-methylene-5,6,7,8-tetrahydrofolate. Position 293 (A293) interacts with (6R)-5,10-methylene-5,6,7,8-tetrahydrofolate.

It belongs to the thymidylate synthase family. Homodimer.

It catalyses the reaction dUMP + (6R)-5,10-methylene-5,6,7,8-tetrahydrofolate = 7,8-dihydrofolate + dTMP. Its pathway is pyrimidine metabolism; dTTP biosynthesis. The chain is Thymidylate synthase (70) from Saimiri sciureus (Common squirrel monkey).